The following is an 811-amino-acid chain: Receptor-like protein 52 (811 aa).

The N-terminal stretch at 1–22 (MTFLPLLFIFFFLTSIPFPAFS) is a signal peptide. The Extracellular segment spans residues 23-770 (QYNDRSTLLN…EDEEEVMNWT (748 aa)). N-linked (GlcNAc...) asparagine glycosylation is found at asparagine 47, asparagine 64, asparagine 74, asparagine 93, asparagine 109, and asparagine 124. LRR repeat units lie at residues 62-86 (AGNVTEINFQNQNFTGTVPTTICNF), 87-110 (PNLKSLNLSFNYFAGEFPTVLYNC), 112-134 (KLQYLDLSQNLFNGSLPDDINRL), 135-159 (APKLKYLDLAANSFAGDIPKNIGRI), 161-183 (KLKVLNLYMSEYDGTFPSEIGDL), and 184-208 (SELEELQLALNDKFTPVKLPTEFGK). Residues 211–233 (KLKYMWLEEMNLIGEISAVVFEN) form an LRR 7; degenerate repeat. N-linked (GlcNAc...) asparagine glycosylation is found at asparagine 233, asparagine 246, asparagine 260, asparagine 295, and asparagine 304. LRR repeat units lie at residues 234-258 (MTDLKHVDLSVNNLTGRIPDVLFGL), 260-281 (NLTELYLFANDLTGEIPKSISA), 282-305 (KNLVHLDLSANNLNGSIPESIGNL), 307-329 (NLELLYLFVNELTGEIPRAIGKL), 330-354 (PELKELKLFTNKLTGEIPAEIGFIS), 356-377 (LERFEVSENQLTGKLPENLCHG), 379-401 (KLQSVIVYSNNLTGEIPESLGDC), and 403-427 (TLSSVLLQNNGFSGSVTISNNTRSN). N-linked (GlcNAc...) asparagine glycans are attached at residues asparagine 389, asparagine 422, asparagine 429, asparagine 455, asparagine 464, and asparagine 485. LRR repeat units follow at residues 441 to 465 (LHSLILLDLSTNKFNGSIPRCIANL), 466 to 489 (STLEVLNLGKNHLSGSIPENISTS), 491 to 511 (KSIDIGHNQLAGKLPRSLVRI), 512 to 537 (SSLEVLNVESNKINDTFPFWLDSMQQ), 539 to 557 (QVLVLRSNAFHGSINQNGF), 558 to 581 (SKLRIIDISGNHFNGTLPLDFFVN), 625 to 649 (LNTFTTIDFSGNKFEGEIPRSVGLL), 650 to 673 (KELHVLNLSNNGFTGHIPSSMGNL), 674 to 697 (IELESLDVSQNKLSGEIPPELGKL), and 699 to 722 (YLAYMNFSQNQFVGLVPGGTQFQT). An N-linked (GlcNAc...) asparagine glycan is attached at asparagine 525. 2 N-linked (GlcNAc...) asparagine glycosylation sites follow: asparagine 571 and asparagine 581. Asparagine 656 is a glycosylation site (N-linked (GlcNAc...) asparagine). Asparagine 704 carries N-linked (GlcNAc...) asparagine glycosylation. Residues 771-791 (AAAIGSIPGISIGLTMGYILV) traverse the membrane as a helical segment. The Cytoplasmic segment spans residues 792-811 (SYKPEWLMNSGRNKRRIKPI).

Belongs to the RLP family.

The protein localises to the cell membrane. Required for defense against powdery mildew pathogen. This Arabidopsis thaliana (Mouse-ear cress) protein is Receptor-like protein 52.